A 104-amino-acid polypeptide reads, in one-letter code: Co-chaperonin GroES 1 (104 aa).

The protein belongs to the GroES chaperonin family. Heptamer of 7 subunits arranged in a ring. Interacts with the chaperonin GroEL.

It is found in the cytoplasm. Together with the chaperonin GroEL, plays an essential role in assisting protein folding. The GroEL-GroES system forms a nano-cage that allows encapsulation of the non-native substrate proteins and provides a physical environment optimized to promote and accelerate protein folding. GroES binds to the apical surface of the GroEL ring, thereby capping the opening of the GroEL channel. In Mesorhizobium japonicum (strain LMG 29417 / CECT 9101 / MAFF 303099) (Mesorhizobium loti (strain MAFF 303099)), this protein is Co-chaperonin GroES 1.